We begin with the raw amino-acid sequence, 502 residues long: Probable cytosol aminopeptidase (502 aa).

Positions 265 and 270 each coordinate Mn(2+). Lys277 is a catalytic residue. Positions 288, 347, and 349 each coordinate Mn(2+). Arg351 is an active-site residue.

The protein belongs to the peptidase M17 family. It depends on Mn(2+) as a cofactor.

It is found in the cytoplasm. It carries out the reaction Release of an N-terminal amino acid, Xaa-|-Yaa-, in which Xaa is preferably Leu, but may be other amino acids including Pro although not Arg or Lys, and Yaa may be Pro. Amino acid amides and methyl esters are also readily hydrolyzed, but rates on arylamides are exceedingly low.. It catalyses the reaction Release of an N-terminal amino acid, preferentially leucine, but not glutamic or aspartic acids.. In terms of biological role, presumably involved in the processing and regular turnover of intracellular proteins. Catalyzes the removal of unsubstituted N-terminal amino acids from various peptides. The polypeptide is Probable cytosol aminopeptidase (Rickettsia bellii (strain OSU 85-389)).